Here is a 473-residue protein sequence, read N- to C-terminus: Glycine receptor subunit beta-type 4 (473 aa).

An N-terminal signal peptide occupies residues 1-19 (MHSLFLKILIYSLMQCVLG). The Extracellular segment spans residues 20–249 (QAEFWDYDEN…EFHVDREITH (230 aa)). N-linked (GlcNAc...) asparagine glycosylation is found at Asn29, Asn105, and Asn151. A disulfide bridge connects residues Cys166 and Cys180. A helical membrane pass occupies residues 250 to 271 (HIIQSYIPTSLIVIISWFSFWL). The Cytoplasmic portion of the chain corresponds to 272-276 (DVEAV). The chain crosses the membrane as a helical span at residues 277-297 (PGRVSLSITTLLTLATQSSAA). Over 298–308 (RMALPQASDVK) the chain is Extracellular. Residues 309–329 (AIDVWMGTCMAFVFSAMIEFT) form a helical membrane-spanning segment. At 330–439 (VVNYCVRRKV…NRKNAQKIDR (110 aa)) the chain is on the cytoplasmic side. A helical membrane pass occupies residues 440–460 (YSRALFPLAFIIFNIFYWIYY). Topologically, residues 461 to 473 (LKYAGSNSPELLL) are extracellular.

The protein belongs to the ligand-gated ion channel (TC 1.A.9) family. Glycine receptor (TC 1.A.9.3) subfamily. In terms of assembly, pentamer.

The protein localises to the postsynaptic cell membrane. It is found in the synapse. It localises to the cell membrane. Its function is as follows. Glycine receptors are ligand-gated chloride channels. Channel opening is triggered by extracellular glycine. Contributes to the generation of inhibitory postsynaptic currents. The polypeptide is Glycine receptor subunit beta-type 4 (Caenorhabditis elegans).